The sequence spans 215 residues: MKSFTVLDGLAAPMDRANVDTDMIIPKQFLKSIKRTGFGKNLFDELRYLDEGKPDQSCEGRPLNTEFPLNFPRYQDASVLLARENFGCGSSREHAPWALDDYGFRSVIAPSFADIFFNNCFKNGLLPIMLDEKIVDQLFREMYASEGYRLNIDLAEQTVTTPSGESFGFEIDAFRKHCLLNGLDDIGLTLEKADKIRAYETRRRAEAPWLFDVVK.

It belongs to the LeuD family. LeuD type 1 subfamily. As to quaternary structure, heterodimer of LeuC and LeuD.

It catalyses the reaction (2R,3S)-3-isopropylmalate = (2S)-2-isopropylmalate. It functions in the pathway amino-acid biosynthesis; L-leucine biosynthesis; L-leucine from 3-methyl-2-oxobutanoate: step 2/4. Functionally, catalyzes the isomerization between 2-isopropylmalate and 3-isopropylmalate, via the formation of 2-isopropylmaleate. This chain is 3-isopropylmalate dehydratase small subunit, found in Cellvibrio japonicus (strain Ueda107) (Pseudomonas fluorescens subsp. cellulosa).